Here is a 498-residue protein sequence, read N- to C-terminus: Phosphoethanolamine N-methyltransferase 1 (498 aa).

S-adenosyl-L-homocysteine contacts are provided by G68, R73, D89, D115, V116, and N134. Positions 167, 172, 173, 177, and 184 each coordinate phosphocholine. N-methylethanolamine phosphate-binding positions include 253–254 and Y262; that span reads QY. Residue Y262 coordinates phosphocholine. Residues V271, S272, G298, D320, D346, C347, and R363 each contribute to the S-adenosyl-L-homocysteine site. The phosphocholine site is built by Y394, Y408, R412, Y414, and K480. Residues Y394, Y408, 412-414, and K480 each bind N-methylethanolamine phosphate; that span reads RGY.

It belongs to the class I-like SAM-binding methyltransferase superfamily. PEAMT family.

It carries out the reaction phosphoethanolamine + S-adenosyl-L-methionine = N-methylethanolamine phosphate + S-adenosyl-L-homocysteine + H(+). The catalysed reaction is N-methylethanolamine phosphate + S-adenosyl-L-methionine = N,N-dimethylethanolamine phosphate + S-adenosyl-L-homocysteine + H(+). It catalyses the reaction N,N-dimethylethanolamine phosphate + S-adenosyl-L-methionine = phosphocholine + S-adenosyl-L-homocysteine + H(+). Its pathway is phospholipid metabolism; phosphatidylcholine biosynthesis; phosphocholine from phosphoethanolamine: step 1/1. Its activity is regulated as follows. Inhibited by phosphatidic acid. Its function is as follows. Involved in phosphocholine biosynthesis. Catalyzes the N-methylation of phosphoethanolamine, phosphomonomethylethanolamine and phosphodimethylethanolamine, the three methylation steps required to convert phosphoethanolamine to phosphocholine (PC). The chain is Phosphoethanolamine N-methyltransferase 1 from Triticum aestivum (Wheat).